The sequence spans 471 residues: Ribulose bisphosphate carboxylase large chain (471 aa).

2 residues coordinate substrate: N115 and T165. The active-site Proton acceptor is K167. Residue K169 participates in substrate binding. Positions 193, 195, and 196 each coordinate Mg(2+). Position 193 is an N6-carboxylysine (K193). The active-site Proton acceptor is H286. Residues R287, H319, and S371 each contribute to the substrate site.

It belongs to the RuBisCO large chain family. Type I subfamily. In terms of assembly, heterohexadecamer of 8 large chains and 8 small chains. It depends on Mg(2+) as a cofactor.

The protein resides in the carboxysome. It catalyses the reaction 2 (2R)-3-phosphoglycerate + 2 H(+) = D-ribulose 1,5-bisphosphate + CO2 + H2O. The catalysed reaction is D-ribulose 1,5-bisphosphate + O2 = 2-phosphoglycolate + (2R)-3-phosphoglycerate + 2 H(+). In terms of biological role, ruBisCO catalyzes two reactions: the carboxylation of D-ribulose 1,5-bisphosphate, the primary event in carbon dioxide fixation, as well as the oxidative fragmentation of the pentose substrate in the photorespiration process. Both reactions occur simultaneously and in competition at the same active site. The protein is Ribulose bisphosphate carboxylase large chain of Synechococcus sp. (strain WH7803).